We begin with the raw amino-acid sequence, 633 residues long: 1-deoxy-D-xylulose-5-phosphate synthase (633 aa).

Positions 1 to 12 (MSEPTANLQPAS) are enriched in polar residues. The segment at 1-21 (MSEPTANLQPASRTPLLDRVN) is disordered. Residues His86 and 127 to 129 (GHA) contribute to the thiamine diphosphate site. Asp158 serves as a coordination point for Mg(2+). Thiamine diphosphate is bound by residues 159–160 (GS), Asn187, and Glu377. Asn187 serves as a coordination point for Mg(2+).

It belongs to the transketolase family. DXPS subfamily. Homodimer. The cofactor is Mg(2+). It depends on thiamine diphosphate as a cofactor.

It catalyses the reaction D-glyceraldehyde 3-phosphate + pyruvate + H(+) = 1-deoxy-D-xylulose 5-phosphate + CO2. It functions in the pathway metabolic intermediate biosynthesis; 1-deoxy-D-xylulose 5-phosphate biosynthesis; 1-deoxy-D-xylulose 5-phosphate from D-glyceraldehyde 3-phosphate and pyruvate: step 1/1. Functionally, catalyzes the acyloin condensation reaction between C atoms 2 and 3 of pyruvate and glyceraldehyde 3-phosphate to yield 1-deoxy-D-xylulose-5-phosphate (DXP). The protein is 1-deoxy-D-xylulose-5-phosphate synthase of Deinococcus geothermalis (strain DSM 11300 / CIP 105573 / AG-3a).